Here is a 622-residue protein sequence, read N- to C-terminus: Prolactin receptor (622 aa).

A signal peptide spans 1–24; it reads MKENVASATVFTLLLFLNTCLLNG. The Extracellular portion of the chain corresponds to 25 to 234; sequence QLPPGKPEIF…QIPSDFTMND (210 aa). Fibronectin type-III domains are found at residues 27-128 and 129-229; these read PPGK…VQPD and PPLE…IPSD. Cysteines 36 and 46 form a disulfide. Asn59 is a glycosylation site (N-linked (GlcNAc...) asparagine). Cys75 and Cys86 are disulfide-bonded. Residue Asn104 is glycosylated (N-linked (GlcNAc...) asparagine). Zn(2+) is bound by residues Asp211 and His212. The short motif at 215–219 is the WSXWS motif element; sequence WSAWS. N-linked (GlcNAc...) asparagine glycosylation is present at Asn233. A helical membrane pass occupies residues 235–258; it reads TTVWISVAVLSAVICLIIVWAVAL. Residues 259-622 are Cytoplasmic-facing; the sequence is KGYSMVTCIF…DPACFTHSFH (364 aa). The Box 1 motif motif lies at 267 to 275; sequence IFPPVPGPK. Disordered stretches follow at residues 326 to 378, 461 to 505, and 520 to 545; these read MSVH…YDPE, SSQT…GSAK, and ALSL…NNKE. Residues 466–486 show a composition bias toward basic and acidic residues; it reads KSREEGKATQQREVESFHSET.

Belongs to the type I cytokine receptor family. Type 1 subfamily. Homodimer upon hormone binding. Interacts with SMARCA1. Interacts with GH1. Interacts with CSH. Interacts with NEK3 and VAV2 and this interaction is prolactin-dependent. As to expression, expressed in breast, placenta, kidney, liver and pancreas.

It is found in the membrane. The protein localises to the secreted. This is a receptor for the anterior pituitary hormone prolactin (PRL). Acts as a prosurvival factor for spermatozoa by inhibiting sperm capacitation through suppression of SRC kinase activation and stimulation of AKT. Isoform 4 is unable to transduce prolactin signaling. Isoform 6 is unable to transduce prolactin signaling. In Homo sapiens (Human), this protein is Prolactin receptor (PRLR).